The primary structure comprises 203 residues: RNA annealing protein YRA2 (203 aa).

At methionine 1 the chain carries N-acetylmethionine. 2 disordered regions span residues 1 to 60 (MDKA…REEP) and 137 to 203 (QPQR…YMKG). Over residues 11 to 20 (NSHTDSSSNH) the composition is skewed to polar residues. Basic and acidic residues predominate over residues 47–60 (SRSKDRLYREREEP). Residues 64–138 (KRIRISKIPL…AKIEVEIYQP (75 aa)) enclose the RRM domain. Composition is skewed to basic residues over residues 139 to 153 (QRKH…RRKQ) and 163 to 180 (PGSH…KNKG).

Belongs to the YRA1 family. In terms of assembly, associates with mRNPs. Interacts with YRA1.

It localises to the nucleus. Functionally, involved in export of poly(A) mRNAs from the nucleus. Recruited to the coding sequences as well as poly-A sites of active genes. This is RNA annealing protein YRA2 (YRA2) from Saccharomyces cerevisiae (strain Lalvin EC1118 / Prise de mousse) (Baker's yeast).